Consider the following 781-residue polypeptide: uncharacterized protein (781 aa).

Disordered stretches follow at residues 1-27 and 56-268; these read MKKD…ELDD and NLHI…SDVH. A compositionally biased stretch (acidic residues) spans 11 to 27; that stretch reads ESLEEYDEENYTSELDD. Positions 57–73 are enriched in basic and acidic residues; that stretch reads LHIDEKSKGNIHDDTNK. Over residues 80-94 the composition is skewed to basic residues; sequence KRKGKLNNKKLKLKK. Positions 99–116 are enriched in acidic residues; the sequence is SDEEEENDKNDKNDDDQY. 4 stretches are compositionally biased toward basic and acidic residues: residues 123-144, 170-188, 216-227, and 251-268; these read DEDR…KGDN, EKNH…HVSV, KTSKKNKNDKTN, and DDYH…SDVH. A coiled-coil region spans residues 616 to 655; sequence NDTYTLSKLNNQINELTKKINILRGNLDKARKNHAAMKSN.

This is an uncharacterized protein from Plasmodium falciparum (isolate 3D7).